A 70-amino-acid chain; its full sequence is Large ribosomal subunit protein bL31 (70 aa).

Residues Cys16, Cys18, Cys37, and Cys40 each coordinate Zn(2+).

Belongs to the bacterial ribosomal protein bL31 family. Type A subfamily. In terms of assembly, part of the 50S ribosomal subunit. Zn(2+) serves as cofactor.

Functionally, binds the 23S rRNA. The chain is Large ribosomal subunit protein bL31 from Haemophilus influenzae (strain PittEE).